A 455-amino-acid polypeptide reads, in one-letter code: Genome polyprotein (455 aa).

C5 acts as the For nuclear inclusion protein A activity in catalysis. A compositionally biased stretch (basic and acidic residues) spans 182-198 (NLDAGKESKKETSDKGN). The segment at 182–225 (NLDAGKESKKETSDKGNKPQNSQVGQGSKEPTKTGTVSKDVNVG) is disordered.

The protein belongs to the potyviridae genome polyprotein family. Genome polyprotein of potyviruses undergoes post-translational proteolytic processing by the main proteinase NIa-pro resulting in the production of at least ten individual proteins. The P1 proteinase and the HC-pro cleave only their respective C-termini autocatalytically. 6K1 is essential for proper proteolytic separation of P3 from CI.

The protein resides in the virion. The catalysed reaction is RNA(n) + a ribonucleoside 5'-triphosphate = RNA(n+1) + diphosphate. In terms of biological role, an RNA-dependent RNA polymerase that plays an essential role in the virus replication. Functionally, involved in aphid transmission, cell-to-cell and systemis movement, encapsidation of the viral RNA and in the regulation of viral RNA amplification. The protein is Genome polyprotein of Citrullus lanatus (Watermelon).